Reading from the N-terminus, the 540-residue chain is Chaperonin GroEL (540 aa).

Residues 29 to 32, 86 to 90, G413, and D493 each bind ATP; these read TLGP and DGTTT. The disordered stretch occupies residues 520–540; sequence AEKPEPKPAPGPADPGAGMDF.

This sequence belongs to the chaperonin (HSP60) family. Forms a cylinder of 14 subunits composed of two heptameric rings stacked back-to-back. Interacts with the co-chaperonin GroES.

It is found in the cytoplasm. The catalysed reaction is ATP + H2O + a folded polypeptide = ADP + phosphate + an unfolded polypeptide.. Together with its co-chaperonin GroES, plays an essential role in assisting protein folding. The GroEL-GroES system forms a nano-cage that allows encapsulation of the non-native substrate proteins and provides a physical environment optimized to promote and accelerate protein folding. This is Chaperonin GroEL from Tropheryma whipplei (strain TW08/27) (Whipple's bacillus).